The sequence spans 96 residues: Iron-sulfur cluster assembly protein CyaY (96 aa).

It belongs to the frataxin family.

Functionally, involved in iron-sulfur (Fe-S) cluster assembly. May act as a regulator of Fe-S biogenesis. The protein is Iron-sulfur cluster assembly protein CyaY of Rickettsia bellii (strain RML369-C).